A 402-amino-acid polypeptide reads, in one-letter code: MSRVSQARNLGKYFLLIDNMLVVLVFFVVFPLISIRFVDQMGWAAVMVGIALGLRQFIQQGLGIFGGAIADRFGAKPMIVTGMLMRAAGFATMGIAHEPWLLWFSCFLSGLGGTLFDPPRSALVVKLIRPEQRGRFFSLLMMQDSAGAVIGALLGSWLLQYDFRLVCATGAILFILCALFNAWLLPAWKLSTVRTPVREGMRRVMSDKRFVTYVLTLAGYYMLAVQVMLMLPIMVNDIAGSPAAVKWMYAIEACLSLTLLYPIARWSEKRFRLEHRLMAGLLVMSLSMIPIGMVGNLQQLFTLICAFYIGSVIAEPARETLSASLADARARGSYMGFSRLGLAIGGAIGYIGGGWLFDMGKALTQPELPWMMLGIIGFITFLALGWQFSHKRTPRRMLEPGA.

The Cytoplasmic portion of the chain corresponds to 1–12 (MSRVSQARNLGK). The chain crosses the membrane as a helical span at residues 13–33 (YFLLIDNMLVVLVFFVVFPLI). The Periplasmic portion of the chain corresponds to 34 to 98 (SIRFVDQMGW…GFATMGIAHE (65 aa)). Residues 99-116 (PWLLWFSCFLSGLGGTLF) traverse the membrane as a helical segment. Residues 117-138 (DPPRSALVVKLIRPEQRGRFFS) are Cytoplasmic-facing. A helical transmembrane segment spans residues 139-159 (LLMMQDSAGAVIGALLGSWLL). Over 160–164 (QYDFR) the chain is Periplasmic. The helical transmembrane segment at 165–185 (LVCATGAILFILCALFNAWLL) threads the bilayer. Residues 186–213 (PAWKLSTVRTPVREGMRRVMSDKRFVTY) lie on the Cytoplasmic side of the membrane. Residues 214-234 (VLTLAGYYMLAVQVMLMLPIM) form a helical membrane-spanning segment. Topologically, residues 235–243 (VNDIAGSPA) are periplasmic. A helical membrane pass occupies residues 244-264 (AVKWMYAIEACLSLTLLYPIA). The Cytoplasmic segment spans residues 265 to 276 (RWSEKRFRLEHR). The helical transmembrane segment at 277 to 297 (LMAGLLVMSLSMIPIGMVGNL) threads the bilayer. The Periplasmic segment spans residues 298–299 (QQ). The chain crosses the membrane as a helical span at residues 300–320 (LFTLICAFYIGSVIAEPARET). The Cytoplasmic portion of the chain corresponds to 321-339 (LSASLADARARGSYMGFSR). The chain crosses the membrane as a helical span at residues 340–360 (LGLAIGGAIGYIGGGWLFDMG). Over 361-367 (KALTQPE) the chain is Periplasmic. Residues 368–388 (LPWMMLGIIGFITFLALGWQF) form a helical membrane-spanning segment. At 389 to 402 (SHKRTPRRMLEPGA) the chain is on the cytoplasmic side.

The protein belongs to the major facilitator superfamily. DHA1 family. MdtH (TC 2.A.1.2.21) subfamily.

The protein localises to the cell inner membrane. The polypeptide is Multidrug resistance protein MdtH (Salmonella choleraesuis (strain SC-B67)).